Here is a 313-residue protein sequence, read N- to C-terminus: Protein FixB (313 aa).

Residue 255–283 (LYLAVGISGQIQHMVGANGAQTIFAINKD) participates in FAD binding.

This sequence belongs to the ETF alpha-subunit/FixB family. Heterodimer of FixA and FixB.

It participates in amine and polyamine metabolism; carnitine metabolism. In terms of biological role, required for anaerobic carnitine reduction. May bring reductant to CaiA. The protein is Protein FixB of Salmonella agona (strain SL483).